The primary structure comprises 229 residues: Small ribosomal subunit protein uS3 (229 aa).

The 69-residue stretch at 39–107 folds into the KH type-2 domain; it reads IRKFLKKELY…EVFINIKEEK (69 aa).

The protein belongs to the universal ribosomal protein uS3 family. As to quaternary structure, part of the 30S ribosomal subunit. Forms a tight complex with proteins S10 and S14.

In terms of biological role, binds the lower part of the 30S subunit head. Binds mRNA in the 70S ribosome, positioning it for translation. This Nitratiruptor sp. (strain SB155-2) protein is Small ribosomal subunit protein uS3.